The following is a 101-amino-acid chain: Large ribosomal subunit protein bL27 (101 aa).

The tract at residues 1 to 21 (MAHKKAGGSSRNGRDSRSKRL) is disordered.

This sequence belongs to the bacterial ribosomal protein bL27 family.

In Buchnera aphidicola subsp. Cinara cedri (strain Cc), this protein is Large ribosomal subunit protein bL27.